A 229-amino-acid polypeptide reads, in one-letter code: Orotate phosphoribosyltransferase (229 aa).

Residues Arg-107, Lys-108, Lys-111, His-113, and 133 to 141 each bind 5-phospho-alpha-D-ribose 1-diphosphate; that span reads EDLTTAGGS. Thr-137 contacts orotate.

Belongs to the purine/pyrimidine phosphoribosyltransferase family. PyrE subfamily. Homodimer. The cofactor is Mg(2+).

The catalysed reaction is orotidine 5'-phosphate + diphosphate = orotate + 5-phospho-alpha-D-ribose 1-diphosphate. It participates in pyrimidine metabolism; UMP biosynthesis via de novo pathway; UMP from orotate: step 1/2. Catalyzes the transfer of a ribosyl phosphate group from 5-phosphoribose 1-diphosphate to orotate, leading to the formation of orotidine monophosphate (OMP). This Rhizobium etli (strain ATCC 51251 / DSM 11541 / JCM 21823 / NBRC 15573 / CFN 42) protein is Orotate phosphoribosyltransferase.